The following is a 388-amino-acid chain: uncharacterized protein (388 aa).

Residues cysteine 18, cysteine 24, cysteine 27, and cysteine 99 each coordinate [4Fe-4S] cluster. S-adenosyl-L-methionine contacts are provided by glutamine 212, glutamate 262, and asparagine 313. Cysteine 343 (nucleophile) is an active-site residue.

It belongs to the class I-like SAM-binding methyltransferase superfamily. RNA M5U methyltransferase family.

This is an uncharacterized protein from Bdellovibrio bacteriovorus (strain ATCC 15356 / DSM 50701 / NCIMB 9529 / HD100).